The following is a 226-amino-acid chain: Cytidylate kinase (226 aa).

Glycine 10 to threonine 18 contributes to the ATP binding site.

The protein belongs to the cytidylate kinase family. Type 1 subfamily.

The protein localises to the cytoplasm. The catalysed reaction is CMP + ATP = CDP + ADP. It catalyses the reaction dCMP + ATP = dCDP + ADP. The sequence is that of Cytidylate kinase from Caldicellulosiruptor saccharolyticus (strain ATCC 43494 / DSM 8903 / Tp8T 6331).